The primary structure comprises 383 residues: 3-ketosteroid-9-alpha-monooxygenase, oxygenase component (383 aa).

Residues 24–126 (WHCLGPVKNF…TDVRGGLLFV (103 aa)) form the Rieske domain. Cysteine 65, histidine 67, cysteine 84, and histidine 87 together coordinate [2Fe-2S] cluster. Asparagine 173, histidine 179, histidine 184, and aspartate 302 together coordinate Fe cation.

Homotrimer. The two-component system 3-ketosteroid-9-alpha-monooxygenase is composed of an oxygenase component KshA and a reductase component KshB. The cofactor is [2Fe-2S] cluster. Requires Fe cation as cofactor.

The enzyme catalyses androsta-1,4-diene-3,17-dione + 2 reduced [2Fe-2S]-[ferredoxin] + O2 + 2 H(+) = 9alpha-hydroxyandrosta-1,4-diene-3,17-dione + 2 oxidized [2Fe-2S]-[ferredoxin] + H2O. Its pathway is lipid metabolism; steroid biosynthesis. Involved in the degradation of cholesterol. Catalyzes the introduction of a 9a-hydroxyl moiety into 1,4-androstadiene-3,17-dione (ADD) to yield the 9alpha-hydroxy-1,4-androstadiene-3,17-dione (9OHADD) intermediate which spontaneously form 3-hydroxy-9,10-seconandrost-1,3,5(10)-triene-9,17-dione (HSA) via the meta-cleavage of ring B with concomitant aromatization of ring A. The protein is 3-ketosteroid-9-alpha-monooxygenase, oxygenase component (kshA) of Mycolicibacterium smegmatis (strain ATCC 700084 / mc(2)155) (Mycobacterium smegmatis).